The primary structure comprises 190 residues: CASP-like protein 1E1 (190 aa).

The tract at residues 1–23 is disordered; the sequence is MEHESKNKVDGMEMEKGKKESGS. At 1–28 the chain is on the cytoplasmic side; it reads MEHESKNKVDGMEMEKGKKESGSRKGLE. A helical membrane pass occupies residues 29–49; sequence LTMRVLALVLTMVAATVLGVA. The Extracellular portion of the chain corresponds to 50-83; it reads KQTKVVPIKLIPTLPPLNVSTTAKASYLSAFVYN. Asparagine 67 carries an N-linked (GlcNAc...) asparagine glycan. The chain crosses the membrane as a helical span at residues 84–104; the sequence is ISANAIACGYTAISIVIVMIS. Residues 105 to 111 lie on the Cytoplasmic side of the membrane; the sequence is KGKRSKS. A helical transmembrane segment spans residues 112–132; sequence LLMAVLIGDLMMVALLFSSTG. Residues 133–163 lie on the Extracellular side of the membrane; the sequence is AAGAIGLMGRHGNKHVMWKKVCGVFGKFCNQ. A helical membrane pass occupies residues 164–184; that stretch reads AAVSVAITLIASVVFMLLVVL. The Cytoplasmic portion of the chain corresponds to 185-190; sequence DALKLP.

The protein belongs to the Casparian strip membrane proteins (CASP) family. Homodimer and heterodimers.

It is found in the cell membrane. This Arabidopsis thaliana (Mouse-ear cress) protein is CASP-like protein 1E1.